We begin with the raw amino-acid sequence, 428 residues long: Enolase (428 aa).

Gln163 serves as a coordination point for (2R)-2-phosphoglycerate. Glu205 functions as the Proton donor in the catalytic mechanism. Mg(2+) is bound by residues Asp242, Glu286, and Asp313. 4 residues coordinate (2R)-2-phosphoglycerate: Lys338, Arg367, Ser368, and Lys389. The active-site Proton acceptor is the Lys338.

It belongs to the enolase family. Mg(2+) is required as a cofactor.

It is found in the cytoplasm. The protein localises to the secreted. Its subcellular location is the cell surface. It catalyses the reaction (2R)-2-phosphoglycerate = phosphoenolpyruvate + H2O. The protein operates within carbohydrate degradation; glycolysis; pyruvate from D-glyceraldehyde 3-phosphate: step 4/5. Its function is as follows. Catalyzes the reversible conversion of 2-phosphoglycerate (2-PG) into phosphoenolpyruvate (PEP). It is essential for the degradation of carbohydrates via glycolysis. The protein is Enolase of Acidovorax ebreus (strain TPSY) (Diaphorobacter sp. (strain TPSY)).